A 555-amino-acid chain; its full sequence is HERV-H_2q24.1 provirus ancestral Env polyprotein (555 aa).

The first 35 residues, 1–35, serve as a signal peptide directing secretion; that stretch reads MILAGRAPSNTSTLMKFYSLLLYSLLFSFPFLYHP. The Extracellular portion of the chain corresponds to 36-515; that stretch reads LPLPSYLHHT…WALSNWMSWV (480 aa). The N-linked (GlcNAc...) asparagine glycan is linked to Asn-47. Positions 64-67 match the CXXC motif; sequence CWLC. N-linked (GlcNAc...) asparagine glycans are attached at residues Asn-222, Asn-265, Asn-283, Asn-352, and Asn-370. Residues 388–408 form a fusion peptide region; that stretch reads VIPLIPLMVGLGLSASTIALS. Asn-475 carries an N-linked (GlcNAc...) asparagine glycan. A helical membrane pass occupies residues 516–536; the sequence is LPILSPLIPIFLLLLFGPCIF. The Cytoplasmic portion of the chain corresponds to 537–555; sequence HLVSQFIQNRIQAITNHSI.

The protein belongs to the gamma type-C retroviral envelope protein family. HERV class-I H env subfamily. As to quaternary structure, the surface (SU) and transmembrane (TM) proteins form a heterodimer. SU and TM are attached by noncovalent interactions or by a labile interchain disulfide bond. Post-translationally, specific enzymatic cleavages in vivo yield the mature SU and TM proteins. As to expression, low expression in testis.

It localises to the virion. Its subcellular location is the cell membrane. Functionally, retroviral envelope proteins mediate receptor recognition and membrane fusion during early infection. Endogenous envelope proteins may have kept, lost or modified their original function during evolution. This endogenous envelope protein has lost its original fusogenic properties. SU mediates receptor recognition. Its function is as follows. TM anchors the envelope heterodimer to the viral membrane through one transmembrane domain. The other hydrophobic domain, called fusion peptide, mediates fusion of the viral membrane with the target cell membrane. The chain is HERV-H_2q24.1 provirus ancestral Env polyprotein from Homo sapiens (Human).